The primary structure comprises 447 residues: Transcription factor azf1 (447 aa).

2 disordered regions span residues 125–155 (HNGASQQPPGAQSSSNEEGAQGKSSSSNEVE) and 174–199 (QSPGVQSLPPLQQLTHGGSNGYPQSY). Residues 127–139 (GASQQPPGAQSSS) show a composition bias toward low complexity. Residues 140 to 155 (NEEGAQGKSSSSNEVE) show a composition bias toward polar residues. C2H2-type zinc fingers lie at residues 225–249 (YACTLPQCGKSFAQKTHLDIHMRAH), 255–279 (FVCKEPSCGQRFSQLGNLKTHQRRH), 285–307 (FSCDICQKRFAQRGNVRAHKITH), and 313–338 (FTCLLDDCGKQFTQLGNLKSHQNKFH). The segment at 377-447 (NKGIKGRGKD…EPYFIERQAH (71 aa)) is disordered. Residues 397-416 (PGSESRRRIEPLSSTDDKMR) show a composition bias toward basic and acidic residues. Residues 421 to 431 (GDTSMYNGGSS) are compositionally biased toward polar residues.

It is found in the nucleus. In terms of biological role, transcription factor that acts as a positive regulator of ochratoxin A (OTA) biosynthesis via controlling the expression of antioxidant genes and oxidative phosphorylation genes. The protein is Transcription factor azf1 of Aspergillus niger (strain ATCC MYA-4892 / CBS 513.88 / FGSC A1513).